We begin with the raw amino-acid sequence, 224 residues long: Peroxiredoxin-6 (224 aa).

In terms of domain architecture, Thioredoxin spans 5 to 169; the sequence is LLLGDEAPNF…ILRVVDSLQL (165 aa). Positions 31–40 are required and sufficient for targeting to lysosomes and lamellar bodies; sequence DSWGILFSHP. Position 44 is a phosphothreonine (threonine 44). Cysteine 47 serves as the catalytic Cysteine sulfenic acid (-SOH) intermediate; for peroxidase activity. Residue lysine 63 is modified to N6-acetyllysine. A Phosphotyrosine modification is found at tyrosine 89. Threonine 93 bears the Phosphothreonine mark. Aspartate 140 functions as the For phospholipase activity in the catalytic mechanism. Phosphothreonine; by MAPK is present on threonine 177. Lysine 209 carries the post-translational modification N6-acetyllysine; alternate. Position 209 is an N6-succinyllysine; alternate (lysine 209).

The protein belongs to the peroxiredoxin family. Prx6 subfamily. In terms of assembly, homodimer. Interacts with GSTP1; mediates PRDX6 glutathionylation and regeneration. Interacts with APEX1. Interacts with STH. May interact with FAM168B. May interact with HTR2A. In terms of processing, irreversibly inactivated by overoxidation of Cys-47 to sulfinic acid (Cys-SO(2)H) and sulfonic acid (Cys-SO(3)H) forms upon oxidative stress. Phosphorylation at Thr-177 by MAP kinases increases the phospholipase activity of the enzyme. The phosphorylated form exhibits a greater lysophosphatidylcholine acyltransferase activity compared to the non-phosphorylated form. In terms of tissue distribution, highly expressed in heart, kidney and liver. Moderate expression in brain and stomach. Very low levels in intestine.

Its subcellular location is the cytoplasm. It is found in the lysosome. It catalyses the reaction a hydroperoxide + 2 glutathione = an alcohol + glutathione disulfide + H2O. The enzyme catalyses a 1,2-diacyl-sn-glycero-3-phosphocholine + H2O = a 1-acyl-sn-glycero-3-phosphocholine + a fatty acid + H(+). The catalysed reaction is a 1-acyl-sn-glycero-3-phosphocholine + an acyl-CoA = a 1,2-diacyl-sn-glycero-3-phosphocholine + CoA. It carries out the reaction 1-hexadecanoyl-sn-glycero-3-phosphocholine + hexadecanoyl-CoA = 1,2-dihexadecanoyl-sn-glycero-3-phosphocholine + CoA. It catalyses the reaction 1,2-dihexadecanoyl-sn-glycero-3-phosphocholine + H2O = 1-hexadecanoyl-sn-glycero-3-phosphocholine + hexadecanoate + H(+). MJ33 or lithium;[(2R)-1-hexadecoxy-3-(2,2,2-trifluoroethoxy)propan-2-yl] methyl phosphate inhibits its phospholipase A2 activity. CI-976 or 2,2-Dimethyl-N-(2,4,6-trimethoxyphenyl)dodecanamide inhibits its lysophosphatidylcholine acyltransferase activity. Thiol-specific peroxidase that catalyzes the reduction of hydrogen peroxide and organic hydroperoxides to water and alcohols, respectively. Can reduce H(2)O(2) and short chain organic, fatty acid, and phospholipid hydroperoxides. Has phospholipase activity. Can either reduce the oxidized sn-2 fatty acyl group of phospholipids (peroxidase activity) or hydrolyze the sn-2 ester bond of phospholipids (phospholipase activity). These activities are dependent on binding to phospholipids at acidic pH and to oxidized phospholipds at cytosolic pH. Plays a role in cell protection against oxidative stress by detoxifying peroxides and in phospholipid homeostasis. Exhibits acyl-CoA-dependent lysophospholipid acyltransferase which mediates the conversion of lysophosphatidylcholine (1-acyl-sn-glycero-3-phosphocholine or LPC) into phosphatidylcholine (1,2-diacyl-sn-glycero-3-phosphocholine or PC). Shows a clear preference for LPC as the lysophospholipid and for palmitoyl CoA as the fatty acyl substrate. This is Peroxiredoxin-6 (Prdx6) from Mus musculus (Mouse).